The primary structure comprises 97 residues: Integration host factor subunit alpha (97 aa).

Belongs to the bacterial histone-like protein family. Heterodimer of an alpha and a beta chain.

Functionally, this protein is one of the two subunits of integration host factor, a specific DNA-binding protein that functions in genetic recombination as well as in transcriptional and translational control. This Colwellia psychrerythraea (strain 34H / ATCC BAA-681) (Vibrio psychroerythus) protein is Integration host factor subunit alpha.